The chain runs to 226 residues: Putative N-acetylmannosamine-6-phosphate 2-epimerase 1 (226 aa).

It belongs to the NanE family.

It catalyses the reaction an N-acyl-D-glucosamine 6-phosphate = an N-acyl-D-mannosamine 6-phosphate. It functions in the pathway amino-sugar metabolism; N-acetylneuraminate degradation; D-fructose 6-phosphate from N-acetylneuraminate: step 3/5. In terms of biological role, converts N-acetylmannosamine-6-phosphate (ManNAc-6-P) to N-acetylglucosamine-6-phosphate (GlcNAc-6-P). This chain is Putative N-acetylmannosamine-6-phosphate 2-epimerase 1, found in Salmonella paratyphi A (strain ATCC 9150 / SARB42).